We begin with the raw amino-acid sequence, 2554 residues long: DnaJ homolog subfamily C GRV2 (2554 aa).

Disordered stretches follow at residues 746–766 and 810–833; these read DVVD…KRLL and QRRA…GVDS. The span at 815–825 shows a compositional bias: polar residues; that stretch reads DSSSEASNPQA. Coiled coils occupy residues 925–951 and 1518–1546; these read TRQE…EDIS and RTAS…LKRQ. A J domain is found at 1524-1606; the sequence is LNEEISNISK…AQCILYRRYG (83 aa). Disordered regions lie at residues 1960–1994 and 2339–2366; these read IEDR…SSEG and SGEV…GQTP. The segment covering 1966 to 1977 has biased composition (polar residues); the sequence is SNDTPELQSSVA. Residues 1982 to 1994 show a composition bias toward basic and acidic residues; sequence IEEHSDHQPSSEG. A compositionally biased stretch (polar residues) spans 2352–2366; sequence VNESTDPSSLPGQTP.

In terms of tissue distribution, constitutively expressed in roots, hypocotyls, leaves (e.g. vascular tissues), stems, flowers (e.g. petals and stigmas), siliques and pollen.

Its subcellular location is the endosome membrane. Functionally, required for endosome formation, vacuolar protein sorting and determination of the embryo growth axis. Necessary for the transport of proteins into protein storage vacuoles (PSVs). Participates in vesicle trafficking from the endosome to the central vacuole. Involved in the regulation of shoot phototropism and gravitropism, probably through the positioning of specialized amyloplasts (statoliths) in endodermal cells. This Arabidopsis thaliana (Mouse-ear cress) protein is DnaJ homolog subfamily C GRV2 (GRV2).